A 151-amino-acid chain; its full sequence is Large ribosomal subunit protein bL9 (151 aa).

The protein belongs to the bacterial ribosomal protein bL9 family.

Binds to the 23S rRNA. The chain is Large ribosomal subunit protein bL9 from Oenococcus oeni (strain ATCC BAA-331 / PSU-1).